Consider the following 413-residue polypeptide: Elongation factor 1-alpha (413 aa).

The tr-type G domain occupies lysine 5–valine 211. Positions glycine 14–serine 21 are G1. A GTP-binding site is contributed by glycine 14–serine 21. Serine 21 contributes to the Mg(2+) binding site. The segment at glycine 60–aspartate 64 is G2. The interval aspartate 81 to glycine 84 is G3. GTP-binding positions include aspartate 81–histidine 85 and asparagine 136–aspartate 139. The tract at residues asparagine 136–aspartate 139 is G4. The segment at serine 175–phenylalanine 177 is G5.

This sequence belongs to the TRAFAC class translation factor GTPase superfamily. Classic translation factor GTPase family. EF-Tu/EF-1A subfamily.

It is found in the cytoplasm. It catalyses the reaction GTP + H2O = GDP + phosphate + H(+). Functionally, GTP hydrolase that promotes the GTP-dependent binding of aminoacyl-tRNA to the A-site of ribosomes during protein biosynthesis. This chain is Elongation factor 1-alpha, found in Methanosphaera stadtmanae (strain ATCC 43021 / DSM 3091 / JCM 11832 / MCB-3).